Reading from the N-terminus, the 406-residue chain is Cholinephosphotransferase 1 (406 aa).

Ala2 is modified (N-acetylalanine). The Cytoplasmic portion of the chain corresponds to 2-62 (AAGAGAGSAP…LLQWIPLWMA (61 aa)). The chain crosses the membrane as a helical span at residues 63-83 (PNSITLLGLAVNVVTTLVLIS). Asn64 serves as a coordination point for CDP-choline. Residues 84–93 (YCPTATEEAP) are Lumenal-facing. A helical transmembrane segment spans residues 94–118 (YWTYLLCALGLFIYQSLDAIDGKQA). Residues Asp111 and Asp114 each coordinate Mg(2+). Arg119 lines the CDP-choline pocket. Topologically, residues 119 to 125 (RRTNSCS) are cytoplasmic. Residues 126-150 (PLGELFDHGCDSLSTVFMAVGASIA) traverse the membrane as a helical segment. Position 132 (Asp132) interacts with Mg(2+). His133 functions as the Proton acceptor in the catalytic mechanism. Asp136 serves as a coordination point for Mg(2+). Residues 151-160 (ARLGTYPDWF) lie on the Lumenal side of the membrane. A helical membrane pass occupies residues 161–179 (FFCSFIGMFVFYCAHWQTY). Over 180–190 (VSGMLRFGKVD) the chain is Cytoplasmic. The chain crosses the membrane as a helical span at residues 191–207 (VTEIQIALVIVFVLSAF). Over 208–222 (GGATMWDYTIPILEI) the chain is Lumenal. The chain crosses the membrane as a helical span at residues 223–248 (KLKILPVLGFLGGVIFSCSNYFHVIL). Over 249-265 (HGGVGKNGSTIAGTSVL) the chain is Cytoplasmic. A helical transmembrane segment spans residues 266 to 281 (SPGLHIGLIIILAIMI). The Lumenal portion of the chain corresponds to 282 to 293 (YKKSATDVFEKH). The chain crosses the membrane as a helical span at residues 294-316 (PCLYILMFGCVFAKVSQKLVVAH). Topologically, residues 317–329 (MTKSELYLQDTVF) are cytoplasmic. The chain crosses the membrane as a helical span at residues 330 to 339 (LGPGLLFLDQ). At 340-346 (YFNNFID) the chain is on the lumenal side. The helical transmembrane segment at 347–376 (EYVVLWMAMVISSFDMVIYFSALCLQISRH) threads the bilayer. Residues 377-406 (LHLNIFKTACHQAPEQVQVLSSKSHQNNMD) are Cytoplasmic-facing.

It belongs to the CDP-alcohol phosphatidyltransferase class-I family. Mg(2+) is required as a cofactor. Requires Mn(2+) as cofactor. Highly expressed in testis, colon, small intestine, heart, prostate and spleen. Also detected in kidney, skeletal muscle, pancreas, leukocytes, ovary and thymus. Weakly expressed in the brain, placenta and lung. Overexpressed in cancerous breast epithelial cell lines.

It localises to the golgi apparatus membrane. The catalysed reaction is CDP-choline + a 1,2-diacyl-sn-glycerol = a 1,2-diacyl-sn-glycero-3-phosphocholine + CMP + H(+). It carries out the reaction 1-octadecanoyl-2-(5Z,8Z,11Z,14Z-eicosatetraenoyl)-sn-glycerol + CDP-choline = 1-octadecanoyl-2-(5Z,8Z,11Z,14Z-eicosatetraenoyl)-sn-glycero-3-phosphocholine + CMP + H(+). The enzyme catalyses 1-hexadecanoyl-2-(9Z-octadecenoyl)-sn-glycerol + CDP-choline = 1-hexadecanoyl-2-(9Z-octadecenoyl)-sn-glycero-3-phosphocholine + CMP + H(+). It catalyses the reaction 1-hexadecanoyl-2-(4Z,7Z,10Z,13Z,16Z,19Z-docosahexaenoyl)-sn-glycerol + CDP-choline = 1-hexadecanoyl-2-(4Z,7Z,10Z,13Z,16Z,19Z-docosahexaenoyl)-sn-glycero-3-phosphocholine + CMP + H(+). The catalysed reaction is 1,2-dioctanoyl-sn-glycerol + CDP-choline = 1,2-dioctanoyl-sn-glycero-3-phosphocholine + CMP + H(+). The protein operates within phospholipid metabolism; phosphatidylcholine biosynthesis; phosphatidylcholine from phosphocholine: step 2/2. In terms of biological role, catalyzes the final step of de novo phosphatidylcholine (PC) synthesis, i.e. the transfer of choline phosphate from CDP-choline to the free hydroxyl of a diacylglycerol (DAG), producing a PC. It thereby plays a central role in the formation and maintenance of vesicular membranes. This chain is Cholinephosphotransferase 1, found in Homo sapiens (Human).